We begin with the raw amino-acid sequence, 312 residues long: MDGGNQSEGSEFLLLGMSESPEQQQILFWMFLSMYLVTVVGNVLIILAINSDSHLHTPMYFFLANLSFTDLFFVTNTIPKMLVNLQSQNKAISYAGCLTQLYFLVSLVALDNLILAVMAYDRYVAICCPLHYTTAMSPKLCILLLSLCWVLSVLYGLIHTILMTRVTFCGSRKIHYIFCEMYVLLRMACSNIQINHTVLIATGCFIFLIPFGFVIISYVLIIRAILRIPSVSKKYKAFSTCASHLGAVSLFYGTLCMVYLKPLHTFSVKDSVATVMYAVVTPMMNPFIYSLRNKDMHGALGRLLDTHFKRLT.

At 1–25 (MDGGNQSEGSEFLLLGMSESPEQQQ) the chain is on the extracellular side. Asparagine 5 carries an N-linked (GlcNAc...) asparagine glycan. Residues 26 to 49 (ILFWMFLSMYLVTVVGNVLIILAI) form a helical membrane-spanning segment. Residues 50 to 57 (NSDSHLHT) are Cytoplasmic-facing. A helical membrane pass occupies residues 58 to 79 (PMYFFLANLSFTDLFFVTNTIP). Residues 80 to 100 (KMLVNLQSQNKAISYAGCLTQ) lie on the Extracellular side of the membrane. Cysteine 97 and cysteine 189 form a disulfide bridge. A helical membrane pass occupies residues 101 to 120 (LYFLVSLVALDNLILAVMAY). Residues 121-139 (DRYVAICCPLHYTTAMSPK) lie on the Cytoplasmic side of the membrane. Residues 140-158 (LCILLLSLCWVLSVLYGLI) traverse the membrane as a helical segment. Residues 159-196 (HTILMTRVTFCGSRKIHYIFCEMYVLLRMACSNIQINH) are Extracellular-facing. N-linked (GlcNAc...) asparagine glycosylation is present at asparagine 195. Residues 197–219 (TVLIATGCFIFLIPFGFVIISYV) form a helical membrane-spanning segment. At 220-236 (LIIRAILRIPSVSKKYK) the chain is on the cytoplasmic side. The chain crosses the membrane as a helical span at residues 237–259 (AFSTCASHLGAVSLFYGTLCMVY). Topologically, residues 260-271 (LKPLHTFSVKDS) are extracellular. A helical transmembrane segment spans residues 272 to 291 (VATVMYAVVTPMMNPFIYSL). Residues 292 to 312 (RNKDMHGALGRLLDTHFKRLT) are Cytoplasmic-facing.

This sequence belongs to the G-protein coupled receptor 1 family.

The protein resides in the cell membrane. Odorant receptor. This chain is Olfactory receptor 1D2 (OR1D2), found in Gorilla gorilla gorilla (Western lowland gorilla).